An 877-amino-acid polypeptide reads, in one-letter code: EF-hand domain-containing family member B (877 aa).

Disordered stretches follow at residues 1–47 (MCSF…GRKS) and 268–290 (AQQPEEQREAENTEPGVEPPDRI). EF-hand domains lie at 605-640 (QNFDTLLAAFRHYDKKGDGVIDRAELQEACDQACLH) and 641-676 (LDEKLLDQLFEYCDVDKDGLINYLEFANFLTWKDKT). Positions 618, 622, 629, 654, 656, 658, and 665 each coordinate Ca(2+).

In terms of assembly, microtubule inner protein component of sperm flagellar doublet microtubules. Interacts with STIM1 and ORAI1; the interactions take place upon Ca(2+)-store depletion and dissociate through a Ca(2+)-dependent mechanism. Interaction with STIM1 inhibits STIM1 interaction with SARAF. As to expression, expressed in trachea multiciliated cells.

Its subcellular location is the cytoplasm. It is found in the cytoskeleton. The protein resides in the cilium axoneme. The protein localises to the flagellum axoneme. In terms of biological role, microtubule inner protein (MIP) part of the dynein-decorated doublet microtubules (DMTs) in cilia axoneme, which is required for motile cilia beating. Cytosolic sensor for calcium, modulates the interaction of STIM1 and ORAI1 upon store depletion and the activation of store-operated Ca(2+) entry (SOCE) and NFAT translocation from cytosol to nucleus. This Bos taurus (Bovine) protein is EF-hand domain-containing family member B.